Here is a 123-residue protein sequence, read N- to C-terminus: Large ribosomal subunit protein eL8 (123 aa).

It belongs to the eukaryotic ribosomal protein eL8 family. Part of the 50S ribosomal subunit. Probably part of the RNase P complex.

It is found in the cytoplasm. In terms of biological role, multifunctional RNA-binding protein that recognizes the K-turn motif in ribosomal RNA, the RNA component of RNase P, box H/ACA, box C/D and box C'/D' sRNAs. The polypeptide is Large ribosomal subunit protein eL8 (Pyrococcus abyssi (strain GE5 / Orsay)).